Consider the following 304-residue polypeptide: Acetyl-coenzyme A carboxylase carboxyl transferase subunit beta (304 aa).

A CoA carboxyltransferase N-terminal domain is found at Leu25–Gln294.

Belongs to the AccD/PCCB family. In terms of assembly, acetyl-CoA carboxylase is a heterohexamer composed of biotin carboxyl carrier protein (AccB), biotin carboxylase (AccC) and two subunits each of ACCase subunit alpha (AccA) and ACCase subunit beta (AccD).

It localises to the cytoplasm. It catalyses the reaction N(6)-carboxybiotinyl-L-lysyl-[protein] + acetyl-CoA = N(6)-biotinyl-L-lysyl-[protein] + malonyl-CoA. It functions in the pathway lipid metabolism; malonyl-CoA biosynthesis; malonyl-CoA from acetyl-CoA: step 1/1. In terms of biological role, component of the acetyl coenzyme A carboxylase (ACC) complex. Biotin carboxylase (BC) catalyzes the carboxylation of biotin on its carrier protein (BCCP) and then the CO(2) group is transferred by the transcarboxylase to acetyl-CoA to form malonyl-CoA. This chain is Acetyl-coenzyme A carboxylase carboxyl transferase subunit beta, found in Sinorhizobium fredii (strain NBRC 101917 / NGR234).